Consider the following 661-residue polypeptide: UvrABC system protein C (661 aa).

Residues 52–130 form the GIY-YIG domain; it reads HKPGVYRMVD…IKRLHPRFNV (79 aa). Positions 240-275 constitute a UVR domain; the sequence is QSIKNDMVQAMHKAAKNFDFEQAAAYRDRLSALSHI.

The protein belongs to the UvrC family. As to quaternary structure, interacts with UvrB in an incision complex.

The protein localises to the cytoplasm. In terms of biological role, the UvrABC repair system catalyzes the recognition and processing of DNA lesions. UvrC both incises the 5' and 3' sides of the lesion. The N-terminal half is responsible for the 3' incision and the C-terminal half is responsible for the 5' incision. The polypeptide is UvrABC system protein C (Bartonella henselae (strain ATCC 49882 / DSM 28221 / CCUG 30454 / Houston 1) (Rochalimaea henselae)).